The following is a 126-amino-acid chain: Holo-[acyl-carrier-protein] synthase (126 aa).

Asp-9 and Glu-58 together coordinate Mg(2+).

This sequence belongs to the P-Pant transferase superfamily. AcpS family. In terms of assembly, homodimer. Mg(2+) is required as a cofactor.

The protein localises to the cytoplasm. It catalyses the reaction apo-[ACP] + CoA = holo-[ACP] + adenosine 3',5'-bisphosphate + H(+). In terms of biological role, transfers the 4'-phosphopantetheine moiety from coenzyme A to the 'Ser-36' of acyl-carrier-protein. This is Holo-[acyl-carrier-protein] synthase from Escherichia coli O157:H7.